Reading from the N-terminus, the 340-residue chain is DnaJ homolog subfamily B member 1 (340 aa).

Positions Gly-2–Glu-70 constitute a J domain. At Thr-307 the chain carries Phosphothreonine.

In terms of assembly, interacts with DNAJC3. Interacts with HSF1 (via transactivation domain); this interaction results in the inhibition of heat shock- and HSF1-induced transcriptional activity during the attenuation and recovery phase period of the heat shock response. Interacts with BAG3.

It localises to the cytoplasm. The protein localises to the nucleus. The protein resides in the nucleolus. Functionally, interacts with HSP70 and can stimulate its ATPase activity. Stimulates the association between HSC70 and HIP. Negatively regulates heat shock-induced HSF1 transcriptional activity during the attenuation and recovery phase period of the heat shock response. Stimulates ATP hydrolysis and the folding of unfolded proteins mediated by HSPA1A/B (in vitro). The protein is DnaJ homolog subfamily B member 1 (DNAJB1) of Homo sapiens (Human).